The primary structure comprises 410 residues: Probable nicotinate phosphoribosyltransferase (410 aa).

Nicotinate-binding residues include tyrosine 15, phenylalanine 170, and threonine 220. The residue at position 223 (histidine 223) is a Phosphohistidine. Threonine 348 lines the 5-phospho-alpha-D-ribose 1-diphosphate pocket.

It belongs to the NAPRTase family. Mg(2+) serves as cofactor. The cofactor is Mn(2+). Post-translationally, transiently phosphorylated on a His residue during the reaction cycle. Phosphorylation strongly increases the affinity for substrates and increases the rate of nicotinate D-ribonucleotide production. Dephosphorylation regenerates the low-affinity form of the enzyme, leading to product release.

It catalyses the reaction nicotinate + 5-phospho-alpha-D-ribose 1-diphosphate + ATP + H2O = nicotinate beta-D-ribonucleotide + ADP + phosphate + diphosphate. It participates in cofactor biosynthesis; NAD(+) biosynthesis; nicotinate D-ribonucleotide from nicotinate: step 1/1. Catalyzes the first step in the biosynthesis of NAD from nicotinic acid, the ATP-dependent synthesis of beta-nicotinate D-ribonucleotide from nicotinate and 5-phospho-D-ribose 1-phosphate. Helps prevent cellular oxidative stress via its role in NAD biosynthesis. The protein is Probable nicotinate phosphoribosyltransferase of Schizosaccharomyces pombe (strain 972 / ATCC 24843) (Fission yeast).